The primary structure comprises 724 residues: Probable methyltransferase PMT28 (724 aa).

Topologically, residues 1–22 (MMERKREMGIAYFARRIKQPRG) are cytoplasmic. A helical; Signal-anchor for type II membrane protein membrane pass occupies residues 23–43 (IWVKMTFIVVLGLCFVFFWSF). At 44–724 (LSSSASTFNV…LCAQKTLWRP (681 aa)) the chain is on the lumenal side. Residues 63–211 (EPVSSRTKSA…ISKKRKRKGP (149 aa)) are disordered. Residues 71–98 (SAHEVSESSKLHERGKVESGSKSKEGKK) are compositionally biased toward basic and acidic residues. Residues 107-125 (HETKKKKEHAVSHPHKKKD) are compositionally biased toward basic residues. Residues 126–140 (VPKPVVEEVVVKEDQ) show a composition bias toward basic and acidic residues. Residues 141–173 (EHEEAESDDSDQSNKEDGEEGTESDGNEGESDG) show a composition bias toward acidic residues. Residues N305, N316, and N568 are each glycosylated (N-linked (GlcNAc...) asparagine).

This sequence belongs to the methyltransferase superfamily.

It is found in the golgi apparatus membrane. This chain is Probable methyltransferase PMT28, found in Arabidopsis thaliana (Mouse-ear cress).